A 415-amino-acid chain; its full sequence is Histidine--tRNA ligase (415 aa).

It belongs to the class-II aminoacyl-tRNA synthetase family. As to quaternary structure, homodimer.

The protein resides in the cytoplasm. The catalysed reaction is tRNA(His) + L-histidine + ATP = L-histidyl-tRNA(His) + AMP + diphosphate + H(+). The protein is Histidine--tRNA ligase of Clostridium perfringens (strain ATCC 13124 / DSM 756 / JCM 1290 / NCIMB 6125 / NCTC 8237 / Type A).